The following is a 520-amino-acid chain: Sodium-dependent dicarboxylate transporter SdcS (520 aa).

A run of 14 helical transmembrane segments spans residues 30–50, 55–75, 77–97, 104–124, 160–180, 207–227, 242–262, 298–318, 323–343, 362–382, 399–419, 428–448, 452–472, and 491–511; these read AGQL…LLFF, LPWE…WWIT, AIPI…GHIL, SEYG…AIAM, SMFV…LAII, IGYA…PLII, FAKW…ITWL, KVVQ…EFLL, VTSS…LFVI, ELPW…KGIS, GVSP…LTEV, MILP…LLLM, AMAA…AIIF, and LISA…VLGI.

This sequence belongs to the SLC13A/DASS transporter (TC 2.A.47) family. NADC subfamily.

It localises to the cell membrane. Functionally, mediates the transport of the dicarboxylates fumarate, malate, and succinate across the cytoplasmic membrane via a Na(+)-electrochemical gradient. This chain is Sodium-dependent dicarboxylate transporter SdcS (sdcS), found in Staphylococcus aureus (strain bovine RF122 / ET3-1).